The primary structure comprises 114 residues: Aspartate 1-decarboxylase (114 aa).

The active-site Schiff-base intermediate with substrate; via pyruvic acid is the Ser25. Ser25 carries the post-translational modification Pyruvic acid (Ser). Substrate is bound at residue Thr57. Tyr58 acts as the Proton donor in catalysis. 73 to 75 (GAA) is a substrate binding site.

The protein belongs to the PanD family. As to quaternary structure, heterooctamer of four alpha and four beta subunits. Requires pyruvate as cofactor. In terms of processing, is synthesized initially as an inactive proenzyme, which is activated by self-cleavage at a specific serine bond to produce a beta-subunit with a hydroxyl group at its C-terminus and an alpha-subunit with a pyruvoyl group at its N-terminus.

The protein localises to the cytoplasm. It carries out the reaction L-aspartate + H(+) = beta-alanine + CO2. It functions in the pathway cofactor biosynthesis; (R)-pantothenate biosynthesis; beta-alanine from L-aspartate: step 1/1. Functionally, catalyzes the pyruvoyl-dependent decarboxylation of aspartate to produce beta-alanine. The polypeptide is Aspartate 1-decarboxylase (Thermotoga sp. (strain RQ2)).